The chain runs to 650 residues: Aminopeptidase B (650 aa).

298 to 302 serves as a coordination point for substrate; that stretch reads GGMEN. A Zn(2+)-binding site is contributed by His325. Glu326 (proton acceptor) is an active-site residue. Residues His329 and Glu348 each coordinate Zn(2+). The residue at position 446 (Lys446) is an N6-acetyllysine.

The protein belongs to the peptidase M1 family. Monomer. It depends on Zn(2+) as a cofactor.

The protein resides in the secreted. It carries out the reaction Release of N-terminal Arg and Lys from oligopeptides when P1' is not Pro. Also acts on arylamides of Arg and Lys.. Exopeptidase which selectively removes arginine and/or lysine residues from the N-terminus of several peptide substrates including Arg(0)-Leu-enkephalin, Arg(0)-Met-enkephalin and Arg(-1)-Lys(0)-somatostatin-14. Can hydrolyze leukotriene A4 (LTA-4) into leukotriene B4 (LTB-4). The polypeptide is Aminopeptidase B (Rnpep) (Mus musculus (Mouse)).